Here is a 184-residue protein sequence, read N- to C-terminus: MSWRSESIWIEFITGSRKTSNFCWAFILFLGSLGFLLVGTSSYLGRNFISVFASQQIIFFPQGIVMSFYGIAGLFISCYLWCTFLWNVGSGYDLFDRKEGIVRIFRWGFPGKSRRIFLRFLMKDIQSIRIEVKEGVSARRVLYMEIRGQGAIPLIRTDENFTTREIEQKAAELAYFLRVPIEVF.

The next 2 helical transmembrane spans lie at 22 to 42 (FCWAFILFLGSLGFLLVGTSS) and 57 to 77 (IIFFPQGIVMSFYGIAGLFIS).

The protein belongs to the Ycf4 family.

Its subcellular location is the plastid. It localises to the chloroplast thylakoid membrane. Its function is as follows. Seems to be required for the assembly of the photosystem I complex. The chain is Photosystem I assembly protein Ycf4 from Arabis hirsuta (Hairy rock-cress).